We begin with the raw amino-acid sequence, 654 residues long: Acetyl-coenzyme A synthetase (654 aa).

CoA-binding positions include 190–193 (RGGK) and Thr-313. ATP is bound by residues 389 to 391 (GEP), 413 to 418 (DTWWQT), Asp-504, and Arg-519. Ser-527 serves as a coordination point for CoA. Arg-530 is a binding site for ATP. Mg(2+) contacts are provided by Val-541, His-543, and Val-546. Lys-613 carries the post-translational modification N6-acetyllysine.

This sequence belongs to the ATP-dependent AMP-binding enzyme family. Requires Mg(2+) as cofactor. In terms of processing, acetylated. Deacetylation by the SIR2-homolog deacetylase activates the enzyme.

The enzyme catalyses acetate + ATP + CoA = acetyl-CoA + AMP + diphosphate. Catalyzes the conversion of acetate into acetyl-CoA (AcCoA), an essential intermediate at the junction of anabolic and catabolic pathways. AcsA undergoes a two-step reaction. In the first half reaction, AcsA combines acetate with ATP to form acetyl-adenylate (AcAMP) intermediate. In the second half reaction, it can then transfer the acetyl group from AcAMP to the sulfhydryl group of CoA, forming the product AcCoA. In Leptospira biflexa serovar Patoc (strain Patoc 1 / Ames), this protein is Acetyl-coenzyme A synthetase.